The sequence spans 127 residues: Glycine cleavage system H protein (127 aa).

Positions 23 to 105 constitute a Lipoyl-binding domain; the sequence is KVSVGITDFA…YGEGWIAVIE (83 aa). The residue at position 64 (Lys-64) is an N6-lipoyllysine.

Belongs to the GcvH family. In terms of assembly, the glycine cleavage system is composed of four proteins: P, T, L and H. (R)-lipoate is required as a cofactor.

The glycine cleavage system catalyzes the degradation of glycine. The H protein shuttles the methylamine group of glycine from the P protein to the T protein. The sequence is that of Glycine cleavage system H protein from Coprothermobacter proteolyticus (strain ATCC 35245 / DSM 5265 / OCM 4 / BT).